The chain runs to 213 residues: Kynurenine formamidase (213 aa).

W18 is a binding site for substrate. Residues H48, H52, and D54 each coordinate Zn(2+). Catalysis depends on H58, which acts as the Proton donor/acceptor. 2 residues coordinate Zn(2+): H160 and E172.

Belongs to the Cyclase 1 superfamily. KynB family. In terms of assembly, homodimer. Requires Zn(2+) as cofactor.

It catalyses the reaction N-formyl-L-kynurenine + H2O = L-kynurenine + formate + H(+). The protein operates within amino-acid degradation; L-tryptophan degradation via kynurenine pathway; L-kynurenine from L-tryptophan: step 2/2. Catalyzes the hydrolysis of N-formyl-L-kynurenine to L-kynurenine, the second step in the kynurenine pathway of tryptophan degradation. This chain is Kynurenine formamidase, found in Burkholderia pseudomallei (strain 668).